A 248-amino-acid polypeptide reads, in one-letter code: Probable transcriptional regulatory protein PHZ_c3068 (248 aa).

The protein belongs to the TACO1 family.

Its subcellular location is the cytoplasm. The protein is Probable transcriptional regulatory protein PHZ_c3068 of Phenylobacterium zucineum (strain HLK1).